A 343-amino-acid polypeptide reads, in one-letter code: uncharacterized protein (343 aa).

It belongs to the histone deacetylase family.

Putative deacetylase. This is an uncharacterized protein from Methanocaldococcus jannaschii (strain ATCC 43067 / DSM 2661 / JAL-1 / JCM 10045 / NBRC 100440) (Methanococcus jannaschii).